A 159-amino-acid polypeptide reads, in one-letter code: Phosphopantetheine adenylyltransferase (159 aa).

Threonine 9 contacts substrate. Residues threonine 9–phenylalanine 10 and histidine 17 each bind ATP. Substrate-binding residues include lysine 41, leucine 73, and arginine 87. ATP is bound by residues glycine 88–arginine 90, glutamate 98, and tyrosine 123–threonine 129.

It belongs to the bacterial CoaD family. Homohexamer. Mg(2+) is required as a cofactor.

It is found in the cytoplasm. It carries out the reaction (R)-4'-phosphopantetheine + ATP + H(+) = 3'-dephospho-CoA + diphosphate. The protein operates within cofactor biosynthesis; coenzyme A biosynthesis; CoA from (R)-pantothenate: step 4/5. Functionally, reversibly transfers an adenylyl group from ATP to 4'-phosphopantetheine, yielding dephospho-CoA (dPCoA) and pyrophosphate. In Pseudomonas syringae pv. tomato (strain ATCC BAA-871 / DC3000), this protein is Phosphopantetheine adenylyltransferase.